Consider the following 261-residue polypeptide: Cytochrome c oxidase subunit 3 (261 aa).

Residues 1–15 are Mitochondrial matrix-facing; it reads MTHQSHAYHMVKPSP. The helical transmembrane segment at 16–34 threads the bilayer; the sequence is WPLTGALSALLMTSGLAMW. The Mitochondrial intermembrane portion of the chain corresponds to 35-40; the sequence is FHFHSM. Residues 41–66 form a helical membrane-spanning segment; it reads TLLMLGLLTNTLTMYQWWRDVTREST. At 67–72 the chain is on the mitochondrial matrix side; sequence YQGHHT. A helical membrane pass occupies residues 73–105; it reads PPVQKGLRYGMILFITSEVFFFAGFFWAFYHSS. Over 106–128 the chain is Mitochondrial intermembrane; the sequence is LAPTPQLGGHWPPTGITPLNPLE. A helical membrane pass occupies residues 129-152; the sequence is VPLLNTSVLLASGVSITWAHHSLM. The Mitochondrial matrix segment spans residues 153-155; that stretch reads ENN. Residues 156–183 traverse the membrane as a helical segment; sequence RNQMIQALLITILLGLYFTLLQASEYFE. The Mitochondrial intermembrane segment spans residues 184–190; it reads SPFTISD. The helical transmembrane segment at 191-223 threads the bilayer; the sequence is GIYGSTFFVATGFHGLHVIIGSTFLTICFIRQL. Residues 224–232 lie on the Mitochondrial matrix side of the membrane; sequence MFHFTSKHH. A helical transmembrane segment spans residues 233–256; it reads FGFEAAAWYWHFVDVVWLFLYVSI. Topologically, residues 257–261 are mitochondrial intermembrane; it reads YWWGS.

Belongs to the cytochrome c oxidase subunit 3 family. Component of the cytochrome c oxidase (complex IV, CIV), a multisubunit enzyme composed of 14 subunits. The complex is composed of a catalytic core of 3 subunits MT-CO1, MT-CO2 and MT-CO3, encoded in the mitochondrial DNA, and 11 supernumerary subunits COX4I1 (or COX4I2), COX5A, COX5B, COX6A1 (or COX6A2), COX6B1 (or COX6B2), COX6C, COX7A2 (or COX7A1), COX7B, COX7C, COX8A and NDUFA4, which are encoded in the nuclear genome. The complex exists as a monomer or a dimer and forms supercomplexes (SCs) in the inner mitochondrial membrane with NADH-ubiquinone oxidoreductase (complex I, CI) and ubiquinol-cytochrome c oxidoreductase (cytochrome b-c1 complex, complex III, CIII), resulting in different assemblies (supercomplex SCI(1)III(2)IV(1) and megacomplex MCI(2)III(2)IV(2)).

The protein localises to the mitochondrion inner membrane. It carries out the reaction 4 Fe(II)-[cytochrome c] + O2 + 8 H(+)(in) = 4 Fe(III)-[cytochrome c] + 2 H2O + 4 H(+)(out). Component of the cytochrome c oxidase, the last enzyme in the mitochondrial electron transport chain which drives oxidative phosphorylation. The respiratory chain contains 3 multisubunit complexes succinate dehydrogenase (complex II, CII), ubiquinol-cytochrome c oxidoreductase (cytochrome b-c1 complex, complex III, CIII) and cytochrome c oxidase (complex IV, CIV), that cooperate to transfer electrons derived from NADH and succinate to molecular oxygen, creating an electrochemical gradient over the inner membrane that drives transmembrane transport and the ATP synthase. Cytochrome c oxidase is the component of the respiratory chain that catalyzes the reduction of oxygen to water. Electrons originating from reduced cytochrome c in the intermembrane space (IMS) are transferred via the dinuclear copper A center (CU(A)) of subunit 2 and heme A of subunit 1 to the active site in subunit 1, a binuclear center (BNC) formed by heme A3 and copper B (CU(B)). The BNC reduces molecular oxygen to 2 water molecules using 4 electrons from cytochrome c in the IMS and 4 protons from the mitochondrial matrix. This Homo sapiens (Human) protein is Cytochrome c oxidase subunit 3 (MT-CO3).